We begin with the raw amino-acid sequence, 23 residues long: Conotoxin as25a (23 aa).

At Pro-4 the chain carries 4-hydroxyproline; partial. The residue at position 23 (Pro-23) is a 4-hydroxyproline; partial; alternate. A Proline amide; alternate modification is found at Pro-23.

The name as25b given in PubMed:23474143 corresponds to the hydroxylated peptide. The amidation of the C-terminus of this hydroxylated peptide is not directly confirmed. Post-translationally, contains 3 disulfide bonds. As to expression, expressed by the venom duct.

Its subcellular location is the secreted. In terms of biological role, upon intracranial injection in mice, as25a (the toxin without the two 4-hydroxyprolines) provokes paralysis of the hind limbs and death with a dose of 240 pmol. The polypeptide is Conotoxin as25a (Conus cancellatus (Cancellate cone)).